The following is a 475-amino-acid chain: Coagulation factor X (475 aa).

The N-terminal stretch at 1–20 is a signal peptide; that stretch reads MAGRLLLLLLCAALPDELRA. The propeptide occupies 21–40; it reads EGGVFIKKESADKFLERTKR. The 45-residue stretch at 41–85 folds into the Gla domain; that stretch reads ANSFLEEMKQGNIERECNEERCSKEEAREAFEDNEKTEEFWNIYV. A 4-carboxyglutamate mark is found at Glu-46, Glu-47, Glu-54, Glu-56, Glu-59, Glu-60, Glu-65, Glu-66, Glu-69, Glu-72, and Glu-79. Cys-57 and Cys-62 are oxidised to a cystine. In terms of domain architecture, EGF-like 1; calcium-binding spans 86-122; it reads DGDQCSSNPCHYGGQCKDGLGSYTCSCLDGYQGKNCE. Disulfide bonds link Cys-90–Cys-101, Cys-95–Cys-110, Cys-112–Cys-121, Cys-129–Cys-140, Cys-136–Cys-152, Cys-154–Cys-167, Cys-175–Cys-348, Cys-247–Cys-252, Cys-267–Cys-283, Cys-396–Cys-410, and Cys-421–Cys-449. A (3R)-3-hydroxyaspartate modification is found at Asp-103. An EGF-like 2 domain is found at 125 to 168; that stretch reads IPKYCKINNGDCEQFCSIKKSVQKDVVCSCTSGYELAEDGKQCV. The propeptide at 186 to 240 is activation peptide; it reads SVILPTNSNTNATSDQDVPSTNGSILEEVFTTTTESPTPPPRNGSSITDPNVDTR. N-linked (GlcNAc...) asparagine glycosylation is found at Asn-196, Asn-207, and Asn-228. The tract at residues 216–237 is disordered; it reads TTTTESPTPPPRNGSSITDPNV. Residues 241 to 473 enclose the Peptidase S1 domain; that stretch reads IVGGDECRPG…FLRWVRTVMR (233 aa). His-282 functions as the Charge relay system in the catalytic mechanism. An N-linked (GlcNAc...) asparagine glycan is attached at Asn-285. Asp-328 acts as the Charge relay system in catalysis. Ser-425 (charge relay system) is an active-site residue.

This sequence belongs to the peptidase S1 family. As to quaternary structure, the two chains are formed from a single-chain precursor by the excision of two Arg residues and are held together by 1 or more disulfide bonds. In terms of processing, the vitamin K-dependent, enzymatic carboxylation of some glutamate residues allows the modified protein to bind calcium. Post-translationally, the activation peptide is cleaved by factor IXa (in the intrinsic pathway), or by factor VIIa (in the extrinsic pathway). The iron and 2-oxoglutarate dependent 3-hydroxylation of aspartate and asparagine is (R) stereospecific within EGF domains. As to expression, liver and chorioallantoic membrane.

The protein localises to the secreted. The enzyme catalyses Selective cleavage of Arg-|-Thr and then Arg-|-Ile bonds in prothrombin to form thrombin.. Factor Xa is a vitamin K-dependent glycoprotein that converts prothrombin to thrombin in the presence of factor Va, calcium and phospholipid during blood clotting. VAP cleaves the fusion proteins of Sendai virus, NDV, and influenza virus a at a specific single arginine-containing site, and plays a key role in the viral spreading in the allantoic sac. This Gallus gallus (Chicken) protein is Coagulation factor X (F10).